The following is a 115-amino-acid chain: Non-specific lipid-transfer protein Cw18 (115 aa).

The N-terminal stretch at 1–25 (MARTAATKLALVALVAAMLLVAADA) is a signal peptide. Cystine bridges form between cysteine 29–cysteine 77, cysteine 39–cysteine 54, cysteine 55–cysteine 97, and cysteine 75–cysteine 111.

It belongs to the plant LTP family. In terms of tissue distribution, highly expressed in leaves and coleoptiles. No expression in roots.

In terms of biological role, plant non-specific lipid-transfer proteins transfer phospholipids as well as galactolipids across membranes. May play a role in wax or cutin deposition in the cell walls of expanding epidermal cells and certain secretory tissues. The sequence is that of Non-specific lipid-transfer protein Cw18 (CW18) from Hordeum vulgare (Barley).